We begin with the raw amino-acid sequence, 254 residues long: Pyridoxine 5'-phosphate synthase (254 aa).

N12 is a 3-amino-2-oxopropyl phosphate binding site. D14–H15 contributes to the 1-deoxy-D-xylulose 5-phosphate binding site. Residue R23 coordinates 3-amino-2-oxopropyl phosphate. Catalysis depends on H48, which acts as the Proton acceptor. 1-deoxy-D-xylulose 5-phosphate-binding residues include R50 and H55. E75 (proton acceptor) is an active-site residue. T105 provides a ligand contact to 1-deoxy-D-xylulose 5-phosphate. H199 functions as the Proton donor in the catalytic mechanism. 3-amino-2-oxopropyl phosphate contacts are provided by residues G200 and G221–F222.

Belongs to the PNP synthase family. Homooctamer; tetramer of dimers.

The protein resides in the cytoplasm. The catalysed reaction is 3-amino-2-oxopropyl phosphate + 1-deoxy-D-xylulose 5-phosphate = pyridoxine 5'-phosphate + phosphate + 2 H2O + H(+). It participates in cofactor biosynthesis; pyridoxine 5'-phosphate biosynthesis; pyridoxine 5'-phosphate from D-erythrose 4-phosphate: step 5/5. In terms of biological role, catalyzes the complicated ring closure reaction between the two acyclic compounds 1-deoxy-D-xylulose-5-phosphate (DXP) and 3-amino-2-oxopropyl phosphate (1-amino-acetone-3-phosphate or AAP) to form pyridoxine 5'-phosphate (PNP) and inorganic phosphate. The protein is Pyridoxine 5'-phosphate synthase of Rhodopseudomonas palustris (strain HaA2).